We begin with the raw amino-acid sequence, 527 residues long: Peptide chain release factor 3 (527 aa).

Residues 9–277 (AKRRTFAIIS…AVVDWAPRPL (269 aa)) enclose the tr-type G domain. GTP contacts are provided by residues 18–25 (SHPDAGKT), 86–90 (DTPGH), and 140–143 (NKLD).

This sequence belongs to the TRAFAC class translation factor GTPase superfamily. Classic translation factor GTPase family. PrfC subfamily.

It is found in the cytoplasm. In terms of biological role, increases the formation of ribosomal termination complexes and stimulates activities of RF-1 and RF-2. It binds guanine nucleotides and has strong preference for UGA stop codons. It may interact directly with the ribosome. The stimulation of RF-1 and RF-2 is significantly reduced by GTP and GDP, but not by GMP. The protein is Peptide chain release factor 3 of Pseudomonas entomophila (strain L48).